The chain runs to 354 residues: Guanine nucleotide-binding protein G(i) subunit alpha-1 (354 aa).

The N-myristoyl glycine moiety is linked to residue G2. C3 carries the S-palmitoyl cysteine lipid modification. One can recognise a G-alpha domain in the interval 32-354 (REVKLLLLGA…KNNLKDCGLF (323 aa)). The tract at residues 35–48 (KLLLLGAGESGKST) is G1 motif. Residues 43 to 48 (ESGKST), 150 to 151 (DS), and 175 to 178 (LRTR) contribute to the GTP site. Position 47 (S47) interacts with Mg(2+). Residues 173–181 (DVLRTRVKT) are G2 motif. Residue T181 coordinates Mg(2+). The G3 motif stretch occupies residues 196–205 (FKMFDVGGQR). Residues 200–204 (DVGGQ), 269–272 (NKKD), and A326 each bind GTP. Residues 265 to 272 (ILFLNKKD) are G4 motif. The segment at 324 to 329 (TCATDT) is G5 motif.

Belongs to the G-alpha family. G(i/o/t/z) subfamily. In terms of assembly, heterotrimeric G proteins are composed of 3 units; alpha, beta and gamma. The alpha chain contains the guanine nucleotide binding site. Part of a spindle orientation complex at least composed of GNAI1, GPSM2 and NUMA1. Identified in complex with the beta subunit GNB1 and the gamma subunit GNG1. Identified in complex with the beta subunit GNB1 and the gamma subunit GNG2. Component of the TAS2R14-GNAI1 complex, consisting of TAS2R14, GNAI1, GNB1 and GNG2; within the complex interacts with TAS2R14; this complex plays a role in the perception of bitterness. GTP binding causes dissociation of the heterotrimer, liberating the individual subunits so that they can interact with downstream effector proteins. Interacts (GDP-bound form) with GPSM1; this inhibits guanine nucleotide exchange and GTP binding. Interacts (GDP-bound form) with GPSM2 (via GoLoco domains); this inhibits guanine nucleotide exchange. Interacts with RGS10; this strongly enhances GTP hydrolysis. Interacts with RGS1 and RGS16; this strongly enhances GTPase activity. Interacts with RGS4. Interacts with RGS12. Interacts (via active GTP- or inactive GDP-bound forms) with RGS14 (via RGS and GoLoco domains). Interacts with RGS3, RGS6, RGS7, RGS8, RGS17, RGS18 and RGS20 (in vitro). Interacts (GDP-bound form) with RIC8A (via C-terminus); promoting GNAI1 folding and association with the plasma membrane. Interacts (inactive GDP-bound form) with NUCB1 (via GBA motif); the interaction leads to activation of GNAI1. Interacts (inactive GDP-bound form) with CCDC88C/DAPLE (via GBA motif); the interaction leads to activation of GNAI1. Interacts (inactive GDP-bound form) with CCDC8A/GIV (via GBA motif). Post-translationally, myristoylation at Gly-2 is required for membrane anchoring before palmitoylation. Palmitoylation at Cys-3 varies with membrane lipid composition.

The protein resides in the nucleus. The protein localises to the cytoplasm. Its subcellular location is the cell membrane. It is found in the cytoskeleton. It localises to the microtubule organizing center. The protein resides in the centrosome. The protein localises to the cell cortex. Its subcellular location is the membrane. The catalysed reaction is GTP + H2O = GDP + phosphate + H(+). Functionally, guanine nucleotide-binding proteins (G proteins) function as transducers downstream of G protein-coupled receptors (GPCRs) in numerous signaling cascades. The alpha chain contains the guanine nucleotide binding site and alternates between an active, GTP-bound state and an inactive, GDP-bound state. Signaling by an activated GPCR promotes GDP release and GTP binding. The alpha subunit has a low GTPase activity that converts bound GTP to GDP, thereby terminating the signal. Both GDP release and GTP hydrolysis are modulated by numerous regulatory proteins. Signaling is mediated via effector proteins, such as adenylate cyclase. Inhibits adenylate cyclase activity of ADCY1, ADCY5 and ADCY6, leading to decreased intracellular cAMP levels. The inactive GDP-bound form prevents the association of RGS14 with centrosomes and is required for the translocation of RGS14 from the cytoplasm to the plasma membrane. Required for normal cytokinesis during mitosis. Required for cortical dynein-dynactin complex recruitment during metaphase. The protein is Guanine nucleotide-binding protein G(i) subunit alpha-1 (GNAI1) of Bos taurus (Bovine).